The following is a 632-amino-acid chain: ATP-dependent DNA helicase RecQ (632 aa).

The Helicase ATP-binding domain maps to 47–215 (IDATLMGKDS…LRHLNLQSPH (169 aa)). 60-67 (MATGNGKS) is an ATP binding site. Residues 159–162 (DEAH) carry the DEAH box motif. Residues 236–385 (PMEQLCRFVL…IEALKLQAIG (150 aa)) enclose the Helicase C-terminal domain. Zn(2+) is bound by residues Cys-393, Cys-410, Cys-413, and Cys-416. The region spanning 544-624 (AQYDKDLFAR…QQHKKVLTQH (81 aa)) is the HRDC domain.

The protein belongs to the helicase family. RecQ subfamily. The cofactor is Mg(2+). Requires Zn(2+) as cofactor.

The catalysed reaction is Couples ATP hydrolysis with the unwinding of duplex DNA by translocating in the 3'-5' direction.. It catalyses the reaction ATP + H2O = ADP + phosphate + H(+). An ATP-dependent DNA helicase which unwinds DNA in a 3'-5' direction. Plays a role in recombination. This Pasteurella multocida (strain Pm70) protein is ATP-dependent DNA helicase RecQ.